The primary structure comprises 66 residues: DNA gyrase inhibitor YacG (66 aa).

Zn(2+) contacts are provided by Cys9, Cys12, Cys28, and Cys32.

It belongs to the DNA gyrase inhibitor YacG family. Interacts with GyrB. Zn(2+) serves as cofactor.

Functionally, inhibits all the catalytic activities of DNA gyrase by preventing its interaction with DNA. Acts by binding directly to the C-terminal domain of GyrB, which probably disrupts DNA binding by the gyrase. The protein is DNA gyrase inhibitor YacG of Pseudomonas fluorescens (strain Pf0-1).